The sequence spans 121 residues: Ribosome-binding factor A (121 aa).

This sequence belongs to the RbfA family. As to quaternary structure, monomer. Binds 30S ribosomal subunits, but not 50S ribosomal subunits or 70S ribosomes.

The protein localises to the cytoplasm. Functionally, one of several proteins that assist in the late maturation steps of the functional core of the 30S ribosomal subunit. Associates with free 30S ribosomal subunits (but not with 30S subunits that are part of 70S ribosomes or polysomes). Required for efficient processing of 16S rRNA. May interact with the 5'-terminal helix region of 16S rRNA. In Heliobacterium modesticaldum (strain ATCC 51547 / Ice1), this protein is Ribosome-binding factor A.